The primary structure comprises 310 residues: GPN-loop GTPase 2 (310 aa).

At A2 the chain carries N-acetylalanine. 19–24 (GSGKTT) is a GTP binding site. The Gly-Pro-Asn (GPN)-loop; involved in dimer interface signature appears at 76–78 (GPN). 178-181 (SKMD) provides a ligand contact to GTP.

The protein belongs to the GPN-loop GTPase family. In terms of assembly, heterodimers with GPN1 or GPN3. Binds to RNA polymerase II (RNAPII).

Its function is as follows. Small GTPase required for proper localization of RNA polymerase II and III (RNAPII and RNAPIII). May act at an RNAP assembly step prior to nuclear import. The chain is GPN-loop GTPase 2 from Rattus norvegicus (Rat).